Consider the following 382-residue polypeptide: MSTYTRPVMLLLSGLLLLTLAIAVLNTLVPLWLAQEHMSTWQVGVVSSSYFTGNLVGTLLTGYVIKRIGFNRSYYLASFIFAAGCAGLGLMIGFWSWLAWRFVAGIGCAMIWVVVESALMCSGTSRNRGRLLAAYMMVYYVGTFLGQLLVSKVSTELMSVLPWVTGLTLAGILPLLFTRVLNQQTENHDSTSITSMLKLRQARLGVNGCIISGIVLGSLYGLMPLYLNHKGVSNASIGFWMAVLVSAGILGQWPIGRLADKFGRLLVLRVQVFVVILGSIAMLSQAAMAPALFILGAAGFTLYPVAMAWACEKVEHHQLVAMNQALLLSYTVGSLLGPSFTAMLMQNFSDNLLFIMIASVSFIYLLMLLRNAGHTPKPVAHV.

Transmembrane regions (helical) follow at residues glycine 14–alanine 34, valine 45–isoleucine 65, phenylalanine 79–alanine 99, phenylalanine 102–serine 122, leucine 131–serine 151, leucine 157–phenylalanine 177, leucine 204–proline 224, alanine 235–isoleucine 255, valine 270–proline 290, alanine 291–cysteine 311, alanine 325–methionine 345, and phenylalanine 348–leucine 368.

Belongs to the major facilitator superfamily. YcaD (TC 2.A.1.26) family.

It is found in the cell inner membrane. This is an uncharacterized protein from Escherichia coli O6:K15:H31 (strain 536 / UPEC).